We begin with the raw amino-acid sequence, 1770 residues long: MESQQLHQNPRSLHGSAYASVTSKEVPSNQDPLAVSASNLPEFDRDSTKVNSQQETTPGTSAVPENHHHVSPQPASVPPPQNGQYQQHGMMTPNKAMASNWAHYQQPSMMTCSHYQTSPAYYQPDPHYPLPQYIPPLSTSSPDPIDSQNQHSEVPQAETKVRNNVLPPHTLTSEENFSTWVKFYIRFLKNSNLGDIIPNDQGEIKRQMTYEEHAYIYNTFQAFAPFHLLPTWVKQILEINYADILTVLCKSVSKMQTNNQELKDWIALANLEYDGSTSADTFEITVSTIIQRLKENNINVSDRLACQLILKGLSGDFKYLRNQYRTKTNMKLSQLFAEIQLIYDENKIMNLNKPSQYKQHSEYKNVSRTSPNTTNTKVTTRNYQRTNSSKPRAAKAHNIATSSKFSRVNNDHINESTVSSQYLSDDNELSLGQQQKESKPTHTIDSNDELPDHLLIDSGASQTLVRSAHYLHHATPNSEINIVDAQKQDIPINAIGNLHFNFQNGTKTSIKALHTPNIAYDLLSLSELANQNITACFTRNTLERSDGTVLAPIVKHGDFYWLSKKYLIPSHISKLTINNVNKSKSVNKYPYPLIHRMLGHANFRSIQKSLKKNAVTYLKESDIEWSNASTYQCPDCLIGKSTKHRHVKGSRLKYQESYEPFQYLHTDIFGPVHHLPKSAPSYFISFTDEKTRFQWVYPLHDRREESILNVFTSILAFIKNQFNARVLVIQMDRGSEYTNKTLHKFFTNRGITACYTTTADSRAHGVAERLNRTLLNDCRTLLHCSGLPNHLWFSAVEFSTIIRNSLVSPKNDKSARQHAGLAGLDITTILPFGQPVIVNNHNPDSKIHPRGIPGYALHPSRNSYGYIIYLPSLKKTVDTTNYVILQDKQSKLDQFNYDTLTFDDDLNRLTAHNQSFIEQNETEQSYDQNTESDHDYQSEIEINSDPLVNDFSSQSINPLQLDKEPVQKVRAPKEVDADISEYNILPSPVRSRTPHIINKESTEMGGTVESDTTSPRHSSTFTARNQKRPGSPNDMIDLTSQDRVNYGLENIKTTRLGGTEEPYIQRNSDTNIKYRTTNSTPSIDDRSSNSESTTPIISIETKAVCDNTPSIDTDPPEYRSSDHATPNIMPDKSSKNVTADSILDDLPLPDLTHQSPTDTSDVSKDIPHIHSRQTNSSLGGMDDSNVLTTTKSKKRSLEDNETEIEVSRDTWNNKNMRSLEPPRSKKRINLIAAIKGVKSIKPVRTTLRYDEAITYNKDNKEKDRYVEAYHKEISQLLKMNTWDTNKYYDRNDIDPKKVINSMFIFNKKRDGTHKARFVARGDIQHPDTYDSDMQSNTVHHYALMTSLSIALDNDYYITQLDISSAYLYADIKEELYIRPPPHLGLNDKLLRLRKSLYGLKQSGANWYETIKSYLINCCDMQEVRGWSCVFKNSQVTICLFVDDMILFSKDLNANKKIITTLKKQYDTKIINLGESDNEIQYDILGLEIKYQRSKYMKLGMEKSLTEKLPKLNVPLNPKGKKLRAPGQPGHYIDQDELEIDEDEYKEKVHEMQKLIGLASYVGYKFRFDLLYYINTLAQHILFPSRQVLDMTYELIQFMWDTRDKQLIWHKNKPTKPDNKLVAISDASYGNQPYYKSQIGNIFLLNGKVIGGKSTKASLTCTSTTEAEIHAVSEAIPLLNNLSHLVQELNKKPIIKGLLTDSRSTISIIKSTNEEKFRNRFFGTKAMRLRDEVSGNNLYVYYIETKKNIADVMTKPLPIKTFKLLTNKWIH.

Polar residues-rich tracts occupy residues 1–11 (MESQQLHQNPR), 19–39 (ASVT…SASN), and 49–60 (KVNSQQETTPGT). Disordered stretches follow at residues 1–88 (MESQ…YQQH) and 355–453 (SQYK…LPDH). An RNA-binding region spans residues 295 to 397 (ENNINVSDRL…SSKPRAAKAH (103 aa)). Positions 369-382 (TSPNTTNTKVTTRN) are enriched in low complexity. Polar residues-rich tracts occupy residues 399–408 (IATSSKFSRV) and 415–435 (ESTV…GQQQ). D457 functions as the For protease activity; shared with dimeric partner in the catalytic mechanism. The interval 579–636 (NVNKSKSVNKYPYPLIHRMLGHANFRSIQKSLKKNAVTYLKESDIEWSNASTYQCPDC) is integrase-type zinc finger-like. Residues 656–831 (ESYEPFQYLH…AGLDITTILP (176 aa)) form the Integrase catalytic domain. Residues D667 and D732 each coordinate Mg(2+). Disordered stretches follow at residues 1003–1038 (EMGG…MIDL) and 1057–1205 (GGTE…TEIE). Composition is skewed to polar residues over residues 1009–1024 (ESDT…FTAR) and 1065–1082 (QRNS…STPS). The Bipartite nuclear localization signal motif lies at 1193-1227 (KKRSLEDNETEIEVSRDTWNNKNMRSLEPPRSKKR). In terms of domain architecture, Reverse transcriptase Ty1/copia-type spans 1353-1491 (NDYYITQLDI…DILGLEIKYQ (139 aa)). Mg(2+)-binding residues include D1361, D1442, D1443, D1625, E1667, and D1700. An RNase H Ty1/copia-type domain is found at 1625 to 1767 (DASYGNQPYY…IKTFKLLTNK (143 aa)).

The capsid protein forms a homotrimer, from which the VLPs are assembled. The protease is a homodimer, whose active site consists of two apposed aspartic acid residues. Initially, virus-like particles (VLPs) are composed of the structural unprocessed proteins Gag and Gag-Pol, and also contain the host initiator methionine tRNA (tRNA(i)-Met) which serves as a primer for minus-strand DNA synthesis, and a dimer of genomic Ty RNA. Processing of the polyproteins occurs within the particle and proceeds by an ordered pathway, called maturation. First, the protease (PR) is released by autocatalytic cleavage of the Gag-Pol polyprotein, and this cleavage is a prerequisite for subsequent processing at the remaining sites to release the mature structural and catalytic proteins. Maturation takes place prior to the RT reaction and is required to produce transposition-competent VLPs.

It is found in the cytoplasm. The protein resides in the nucleus. The catalysed reaction is DNA(n) + a 2'-deoxyribonucleoside 5'-triphosphate = DNA(n+1) + diphosphate. It carries out the reaction Endonucleolytic cleavage to 5'-phosphomonoester.. Capsid protein (CA) is the structural component of the virus-like particle (VLP), forming the shell that encapsulates the retrotransposons dimeric RNA genome. The particles are assembled from trimer-clustered units and there are holes in the capsid shells that allow for the diffusion of macromolecules. CA also has nucleocapsid-like chaperone activity, promoting primer tRNA(i)-Met annealing to the multipartite primer-binding site (PBS), dimerization of Ty2 RNA and initiation of reverse transcription. Functionally, the aspartyl protease (PR) mediates the proteolytic cleavages of the Gag and Gag-Pol polyproteins after assembly of the VLP. Its function is as follows. Reverse transcriptase/ribonuclease H (RT) is a multifunctional enzyme that catalyzes the conversion of the retro-elements RNA genome into dsDNA within the VLP. The enzyme displays a DNA polymerase activity that can copy either DNA or RNA templates, and a ribonuclease H (RNase H) activity that cleaves the RNA strand of RNA-DNA heteroduplexes during plus-strand synthesis and hydrolyzes RNA primers. The conversion leads to a linear dsDNA copy of the retrotransposon that includes long terminal repeats (LTRs) at both ends. In terms of biological role, integrase (IN) targets the VLP to the nucleus, where a subparticle preintegration complex (PIC) containing at least integrase and the newly synthesized dsDNA copy of the retrotransposon must transit the nuclear membrane. Once in the nucleus, integrase performs the integration of the dsDNA into the host genome. This is Transposon Ty2-C Gag-Pol polyprotein (TY2B-C) from Saccharomyces cerevisiae (strain ATCC 204508 / S288c) (Baker's yeast).